A 410-amino-acid polypeptide reads, in one-letter code: Arginine deiminase (410 aa).

The Amidino-cysteine intermediate role is filled by Cys-400.

This sequence belongs to the arginine deiminase family.

It is found in the cytoplasm. It catalyses the reaction L-arginine + H2O = L-citrulline + NH4(+). Its pathway is amino-acid degradation; L-arginine degradation via ADI pathway; carbamoyl phosphate from L-arginine: step 1/2. The polypeptide is Arginine deiminase (Bacillus cytotoxicus (strain DSM 22905 / CIP 110041 / 391-98 / NVH 391-98)).